The sequence spans 400 residues: 1-deoxy-D-xylulose 5-phosphate reductoisomerase (400 aa).

T10, G11, S12, I13, G36, N38, and N124 together coordinate NADPH. Residue K125 participates in 1-deoxy-D-xylulose 5-phosphate binding. E126 contacts NADPH. Position 150 (D150) interacts with Mn(2+). Residues S151, E152, S186, and H209 each contribute to the 1-deoxy-D-xylulose 5-phosphate site. E152 provides a ligand contact to Mn(2+). Residue G215 coordinates NADPH. Residues S222, N227, K228, and E231 each contribute to the 1-deoxy-D-xylulose 5-phosphate site. E231 is a binding site for Mn(2+).

The protein belongs to the DXR family. Requires Mg(2+) as cofactor. Mn(2+) is required as a cofactor.

It catalyses the reaction 2-C-methyl-D-erythritol 4-phosphate + NADP(+) = 1-deoxy-D-xylulose 5-phosphate + NADPH + H(+). It participates in isoprenoid biosynthesis; isopentenyl diphosphate biosynthesis via DXP pathway; isopentenyl diphosphate from 1-deoxy-D-xylulose 5-phosphate: step 1/6. In terms of biological role, catalyzes the NADPH-dependent rearrangement and reduction of 1-deoxy-D-xylulose-5-phosphate (DXP) to 2-C-methyl-D-erythritol 4-phosphate (MEP). The polypeptide is 1-deoxy-D-xylulose 5-phosphate reductoisomerase (Aliivibrio salmonicida (strain LFI1238) (Vibrio salmonicida (strain LFI1238))).